The chain runs to 361 residues: Chorismate synthase (361 aa).

Residues R48 and R54 each coordinate NADP(+). FMN-binding positions include 125–127, 238–239, G278, 293–297, and R319; these read RSS, NA, and KPTSS.

This sequence belongs to the chorismate synthase family. In terms of assembly, homotetramer. FMNH2 is required as a cofactor.

The enzyme catalyses 5-O-(1-carboxyvinyl)-3-phosphoshikimate = chorismate + phosphate. It functions in the pathway metabolic intermediate biosynthesis; chorismate biosynthesis; chorismate from D-erythrose 4-phosphate and phosphoenolpyruvate: step 7/7. In terms of biological role, catalyzes the anti-1,4-elimination of the C-3 phosphate and the C-6 proR hydrogen from 5-enolpyruvylshikimate-3-phosphate (EPSP) to yield chorismate, which is the branch point compound that serves as the starting substrate for the three terminal pathways of aromatic amino acid biosynthesis. This reaction introduces a second double bond into the aromatic ring system. In Enterobacter sp. (strain 638), this protein is Chorismate synthase.